We begin with the raw amino-acid sequence, 86 residues long: Small ribosomal subunit protein bS16 (86 aa).

The protein belongs to the bacterial ribosomal protein bS16 family.

In Mycoplasmoides gallisepticum (strain R(low / passage 15 / clone 2)) (Mycoplasma gallisepticum), this protein is Small ribosomal subunit protein bS16.